The sequence spans 131 residues: Protein FON2 SPARE1 (131 aa).

The first 22 residues, 1 to 22, serve as a signal peptide directing secretion; it reads MSRRLGAAAAVLLLWLAVLTFA. The tract at residues 67-131 is disordered; that stretch reads SPSSLTTTDR…VPTGPNPLHH (65 aa). Positions 76–97 are enriched in basic residues; that stretch reads RHHHHHRHHGHHHHRGHDRWNR.

This sequence belongs to the CLV3/ESR signal peptide family. As to expression, expressed in all aerial apical meristems, including the floral and inflorescence meristems in the reproductive phase and the shoot apical meristem in the vegetative phase. Also detected in the primordia of lateral organs such as the leaf and the floral organs.

The protein localises to the secreted. Functionally, involved in the maintenance of the floral meristem and of the shoot apical meristem in the vegetative phase. Suppresses the fon2 mutation and acts independently of FON1. In Oryza sativa subsp. japonica, the protein has a single amino acid substitution at the putative processing site of the signal peptide and is inactive. In Oryza sativa subsp. indica (Rice), this protein is Protein FON2 SPARE1 (FOS1).